The primary structure comprises 436 residues: GTPase Der (436 aa).

EngA-type G domains follow at residues 4-167 and 176-351; these read PVVA…KNLP and VQFC…ENHA. GTP-binding positions include 10–17, 57–61, 119–122, 182–189, 229–233, and 294–297; these read GRPNVGKS, DTGGI, NKLD, DTAGM, and NKWD. The 85-residue stretch at 352–436 folds into the KH-like domain; the sequence is MRVQTNILND…PIKIFARARK (85 aa).

The protein belongs to the TRAFAC class TrmE-Era-EngA-EngB-Septin-like GTPase superfamily. EngA (Der) GTPase family. In terms of assembly, associates with the 50S ribosomal subunit.

In terms of biological role, GTPase that plays an essential role in the late steps of ribosome biogenesis. The polypeptide is GTPase Der (Bacillus pumilus (strain SAFR-032)).